The primary structure comprises 839 residues: A disintegrin and metalloproteinase with thrombospondin motifs 4 (839 aa).

The signal sequence occupies residues 1–51 (MSHMDSHPGRGLADGWLWGIQPRLLLPTVPVSGSRLVWLLLLASLLPSAWP). Positions 52–212 (ASPLPREEEI…PSPSPRRAKR (161 aa)) are excised as a propeptide. Residue asparagine 68 is glycosylated (N-linked (GlcNAc...) asparagine). The interval 166-209 (EGGAPNSAGGPGAHILRRKSPVSGQGPMCNVKAPPGKPSPSPRR) is disordered. The short motif at 192–199 (PMCNVKAP) is the Cysteine switch element. Cysteine 194 is a Zn(2+) binding site. Residues 218–428 (RFVETLVVAD…GFGHCLLDKP (211 aa)) enclose the Peptidase M12B domain. Disulfide bonds link cysteine 293–cysteine 345, cysteine 322–cysteine 327, cysteine 339–cysteine 423, cysteine 377–cysteine 407, cysteine 449–cysteine 472, cysteine 460–cysteine 482, cysteine 467–cysteine 501, cysteine 495–cysteine 506, cysteine 532–cysteine 569, cysteine 536–cysteine 574, and cysteine 547–cysteine 559. Histidine 361 lines the Zn(2+) pocket. Glutamate 362 is an active-site residue. 2 residues coordinate Zn(2+): histidine 365 and histidine 371. One can recognise a Disintegrin domain in the interval 437–519 (TFPGKDYDAD…DQLQAFNVPQ (83 aa)). Positions 520 to 575 (AGGWGPWGSWGDCSRSCGGGVQFSSRDCTRPVPRNGGKYCEGRRTRFRSCNTQDCP) constitute a TSP type-1 domain. Residues 686-839 (SKQSGSFKKF…LRRRSWAGRK (154 aa)) are spacer.

As to quaternary structure, interacts with SRPX2. Requires Zn(2+) as cofactor. In terms of processing, the precursor is cleaved by a furin endopeptidase. Glycosylated. Can be O-fucosylated by POFUT2 on a serine or a threonine residue found within the consensus sequence C1-X(2)-(S/T)-C2-G of the TSP type-1 repeat domains where C1 and C2 are the first and second cysteine residue of the repeat, respectively. Fucosylated repeats can then be further glycosylated by the addition of a beta-1,3-glucose residue by the glucosyltransferase, B3GALTL. Fucosylation mediates the efficient secretion of ADAMTS family members. Can also be C-glycosylated with one or two mannose molecules on tryptophan residues within the consensus sequence W-X-X-W of the TPRs, and N-glycosylated. These other glycosylations can also facilitate secretion.

The protein localises to the secreted. It is found in the extracellular space. Its subcellular location is the extracellular matrix. The enzyme catalyses Glutamyl endopeptidase. Bonds cleaved include 370-Thr-Glu-Gly-Glu-|-Ala-Arg-Gly-Ser-377 in the interglobular domain of mammalian aggrecan.. Functionally, cleaves aggrecan, a cartilage proteoglycan, at the '392-Glu-|-Ala-393' site and may be involved in its turnover. Also cleaves COMP. May play an important role in the destruction of aggrecan in arthritic diseases. This is A disintegrin and metalloproteinase with thrombospondin motifs 4 (ADAMTS4) from Bos taurus (Bovine).